The primary structure comprises 163 residues: Calmodulin (163 aa).

Residue Ala-2 is modified to N-acetylalanine. EF-hand domains follow at residues 11–46 (EQIAEFKEAFALFDKDGDGTITTKELGTVMRSLGQN), 47–82 (PTEAELQDMISEVDADGNGTIDFPEFLMLMARKMKE), 84–119 (DHEDELREAFKVFDKDGNGFISAAELRHVMTNLGEK), and 120–155 (LSEEEVDEMIREADVDGDGQVNYEEFVRMMTSGATD). 19 residues coordinate Ca(2+): Asp-24, Asp-26, Asp-28, Thr-30, Glu-35, Asp-60, Asp-62, Asn-64, Thr-66, Glu-71, Asp-97, Asp-99, Asn-101, Glu-108, Asp-133, Asp-135, Asp-137, Gln-139, and Glu-144.

Belongs to the calmodulin family. As to quaternary structure, associates with the spoke-associated complex containing CFAP61, CFAP91 and CFAP251; the association is calcium sensitive. Trimethylation of Lys-119 observed in other calmodulins is absent here.

It localises to the cytoplasm. The protein resides in the cytoskeleton. It is found in the flagellum axoneme. In terms of biological role, calmodulin mediates the control of a large number of enzymes, ion channels and other proteins by Ca(2+). Among the enzymes to be stimulated by the calmodulin-Ca(2+) complex are a number of protein kinases and phosphatases. This chain is Calmodulin, found in Chlamydomonas reinhardtii (Chlamydomonas smithii).